Consider the following 682-residue polypeptide: MTTQPRKILVTCALPYANGAIHLGHMLEHIQADIWVRFQRMRGNKIHFVCADDAHGTPIMLNADKLGITPEELIAKAKADHIRDFAGFNISFDNYHSTHSEENKQLTAEIYNKLKANGFIKSKVISQLFDPEKNMFLPDRFVKGTCPKCKAEDQYGDNCEVCASTYSPMDLINPRSAVSGTTPIVKESEHFFFDLPAFEGMLKEWTRSGSLQSEIANKMQEWFESDLQQWDISRDAPYFGFEIPGAKDKFFYVWLDAPIGYMASFKNLCNREGIDFNEFWAEGSDAELYHFIGKDIVYFHSLFWPAMLEGSGYRKPTNVFAHGYVTVDGAKMSKSRGTFIQASTYLNHIDPECLRYYYAAKLNDRIEDLDFNLEDFVQRVNTDIVNKLVNLASRNAGFIAKRFEGKLADKLEDKSLFAEFTAQAEQIAAYYESREYNKTIREIMALTDKANKYIDEKAPWVIAKEEGKEAELQAVCSMGIELFRVLMSYLKPVLPKLAERAETFLQAELRWDNIHQPLLGHTLAPFKALFSRLEKKQIDAVVEETKALFAAANKAAEKTEAKPTALSAVEPIAETITIDDFAKLDMRVAKVLKCEAVPESNKLLRFELDLGDHTRQVFSGIKAAYNKPEELEGRFVIMVANLAPRKMKFGVSEGMILSAGTGGSDLFLLSADSGVTAGMQVK.

The 'HIGH' region motif lies at 15 to 25 (PYANGAIHLGH). Zn(2+)-binding residues include Cys-146, Cys-149, Cys-159, and Cys-162. The short motif at 331–335 (KMSKS) is the 'KMSKS' region element. Lys-334 is an ATP binding site. A tRNA-binding domain is found at 580 to 682 (DFAKLDMRVA…SGVTAGMQVK (103 aa)).

This sequence belongs to the class-I aminoacyl-tRNA synthetase family. MetG type 1 subfamily. As to quaternary structure, homodimer. The cofactor is Zn(2+).

It localises to the cytoplasm. It catalyses the reaction tRNA(Met) + L-methionine + ATP = L-methionyl-tRNA(Met) + AMP + diphosphate. In terms of biological role, is required not only for elongation of protein synthesis but also for the initiation of all mRNA translation through initiator tRNA(fMet) aminoacylation. The chain is Methionine--tRNA ligase from Haemophilus influenzae (strain ATCC 51907 / DSM 11121 / KW20 / Rd).